A 603-amino-acid chain; its full sequence is Arginine--tRNA ligase (603 aa).

The short motif at 143–153 (PNIAKEMHVGH) is the 'HIGH' region element.

Belongs to the class-I aminoacyl-tRNA synthetase family. As to quaternary structure, monomer.

The protein localises to the cytoplasm. The enzyme catalyses tRNA(Arg) + L-arginine + ATP = L-arginyl-tRNA(Arg) + AMP + diphosphate. In Prochlorococcus marinus (strain MIT 9303), this protein is Arginine--tRNA ligase.